Reading from the N-terminus, the 424-residue chain is Dihydroorotase (424 aa).

His-61 and His-63 together coordinate Zn(2+). Substrate-binding positions include 63–65 and Asn-95; that span reads HLR. The Zn(2+) site is built by Asp-153, His-180, and His-233. Asn-279 lines the substrate pocket. Asp-306 is a binding site for Zn(2+). Asp-306 is a catalytic residue. His-310 contributes to the substrate binding site.

This sequence belongs to the metallo-dependent hydrolases superfamily. DHOase family. Class I DHOase subfamily. The cofactor is Zn(2+).

The enzyme catalyses (S)-dihydroorotate + H2O = N-carbamoyl-L-aspartate + H(+). The protein operates within pyrimidine metabolism; UMP biosynthesis via de novo pathway; (S)-dihydroorotate from bicarbonate: step 3/3. Functionally, catalyzes the reversible cyclization of carbamoyl aspartate to dihydroorotate. The chain is Dihydroorotase from Citrifermentans bemidjiense (strain ATCC BAA-1014 / DSM 16622 / JCM 12645 / Bem) (Geobacter bemidjiensis).